Reading from the N-terminus, the 333-residue chain is B3 domain-containing transcription factor NGA4 (333 aa).

The segment at residues 36 to 145 is a DNA-binding region (TF-B3); sequence FDKVLTPSDV…KIMFIDWRPR (110 aa). A disordered region spans residues 268-333; that stretch reads VEESSSSGDT…YKRKGKSLEL (66 aa). Basic and acidic residues predominate over residues 323-333; the sequence is EYKRKGKSLEL.

It is found in the nucleus. Functionally, regulates lateral organ growth. Functionally redundant with NGA1, NGA2 and NGA3. The polypeptide is B3 domain-containing transcription factor NGA4 (NGA4) (Arabidopsis thaliana (Mouse-ear cress)).